A 901-amino-acid polypeptide reads, in one-letter code: Protein translocase subunit SecA (901 aa).

ATP-binding positions include glutamine 85, 103 to 107, and aspartate 492; that span reads GEGKT. The interval 828-901 is disordered; sequence GLVTDDGGNP…PKNRRNKKRR (74 aa). Residues 871 to 881 are compositionally biased toward basic and acidic residues; it reads DGQKPRGEGNR. A compositionally biased stretch (basic residues) spans 882 to 901; sequence AARRSAASKKPKNRRNKKRR.

It belongs to the SecA family. Monomer and homodimer. Part of the essential Sec protein translocation apparatus which comprises SecA, SecYEG and auxiliary proteins SecDF. Other proteins may also be involved.

It is found in the cell membrane. The protein resides in the cytoplasm. It carries out the reaction ATP + H2O + cellular proteinSide 1 = ADP + phosphate + cellular proteinSide 2.. Part of the Sec protein translocase complex. Interacts with the SecYEG preprotein conducting channel. Has a central role in coupling the hydrolysis of ATP to the transfer of proteins into and across the cell membrane, serving as an ATP-driven molecular motor driving the stepwise translocation of polypeptide chains across the membrane. The chain is Protein translocase subunit SecA from Cutibacterium acnes (strain DSM 16379 / KPA171202) (Propionibacterium acnes).